We begin with the raw amino-acid sequence, 108 residues long: T cell receptor alpha variable 1-1 (108 aa).

Residues 1–18 (MWGAFLLYVSMKMGGTAG) form the signal peptide. Residues 19–108 (QSLEQPSEVT…DSASYFCAVR (90 aa)) enclose the Ig-like domain. N-linked (GlcNAc...) asparagine glycosylation occurs at Asn-38. Cys-39 and Cys-105 are joined by a disulfide.

In terms of assembly, alpha-beta TR is a heterodimer composed of an alpha and beta chain; disulfide-linked. The alpha-beta TR is associated with the transmembrane signaling CD3 coreceptor proteins to form the TR-CD3 (TcR or TCR). The assembly of alpha-beta TR heterodimers with CD3 occurs in the endoplasmic reticulum where a single alpha-beta TR heterodimer associates with one CD3D-CD3E heterodimer, one CD3G-CD3E heterodimer and one CD247 homodimer forming a stable octameric structure. CD3D-CD3E and CD3G-CD3E heterodimers preferentially associate with TR alpha and TR beta chains, respectively. The association of the CD247 homodimer is the last step of TcR assembly in the endoplasmic reticulum and is required for transport to the cell surface.

The protein resides in the cell membrane. Its function is as follows. V region of the variable domain of T cell receptor (TR) alpha chain that participates in the antigen recognition. Alpha-beta T cell receptors are antigen specific receptors which are essential to the immune response and are present on the cell surface of T lymphocytes. Recognize peptide-major histocompatibility (MH) (pMH) complexes that are displayed by antigen presenting cells (APC), a prerequisite for efficient T cell adaptive immunity against pathogens. Binding of alpha-beta TR to pMH complex initiates TR-CD3 clustering on the cell surface and intracellular activation of LCK that phosphorylates the ITAM motifs of CD3G, CD3D, CD3E and CD247 enabling the recruitment of ZAP70. In turn ZAP70 phosphorylates LAT, which recruits numerous signaling molecules to form the LAT signalosome. The LAT signalosome propagates signal branching to three major signaling pathways, the calcium, the mitogen-activated protein kinase (MAPK) kinase and the nuclear factor NF-kappa-B (NF-kB) pathways, leading to the mobilization of transcription factors that are critical for gene expression and essential for T cell growth and differentiation. The T cell repertoire is generated in the thymus, by V-(D)-J rearrangement. This repertoire is then shaped by intrathymic selection events to generate a peripheral T cell pool of self-MH restricted, non-autoaggressive T cells. Post-thymic interaction of alpha-beta TR with the pMH complexes shapes TR structural and functional avidity. In Homo sapiens (Human), this protein is T cell receptor alpha variable 1-1.